A 228-amino-acid polypeptide reads, in one-letter code: Probable septum site-determining protein MinC (228 aa).

It belongs to the MinC family. As to quaternary structure, interacts with MinD and FtsZ.

Functionally, cell division inhibitor that blocks the formation of polar Z ring septums. Rapidly oscillates between the poles of the cell to destabilize FtsZ filaments that have formed before they mature into polar Z rings. Prevents FtsZ polymerization. This Bacillus cytotoxicus (strain DSM 22905 / CIP 110041 / 391-98 / NVH 391-98) protein is Probable septum site-determining protein MinC.